The primary structure comprises 750 residues: GRIP and coiled-coil domain-containing protein C27D7.02c (750 aa).

Disordered stretches follow at residues 14 to 53 and 188 to 280; these read AQGQEEAKNRRRQFQEEDQLRRNNKSSNKLSQNEEDAKNM and KTVE…RDIA. 2 stretches are compositionally biased toward basic and acidic residues: residues 18 to 34 and 188 to 198; these read EEAKNRRRQFQEEDQLR and KTVETKNDVPE. The stretch at 28-182 forms a coiled coil; that stretch reads QEEDQLRRNN…AQSIEQEVIS (155 aa). A compositionally biased stretch (polar residues) spans 201-213; it reads RPSTDTIGVSSAL. Residues 213-243 adopt a coiled-coil conformation; it reads LSKKKKKRNRKNQKKKSTKQNIEATTENDAL. Residues 214 to 230 are compositionally biased toward basic residues; that stretch reads SKKKKKRNRKNQKKKST. Residues 233 to 251 are compositionally biased toward polar residues; sequence NIEATTENDALSESISTPD. The segment covering 269-280 has biased composition (basic and acidic residues); sequence ADSKEEERRDIA. A coiled-coil region spans residues 344-665; sequence KLVEELTKQL…YEHLQKSFKN (322 aa). A disordered region spans residues 672-703; sequence KQQPSNHGRNSSVSRSSSSVEVNSKHPGSDDM. Positions 676-693 are enriched in low complexity; the sequence is SNHGRNSSVSRSSSSVEV. A compositionally biased stretch (basic and acidic residues) spans 694-703; the sequence is NSKHPGSDDM. The GRIP domain maps to 700–748; that stretch reads SDDMLIDKEYTRNILFQFLEQRDRRPEIVNLLSILLDLSEEQKQKLLSV.

The protein localises to the cytoplasm. The protein is GRIP and coiled-coil domain-containing protein C27D7.02c of Schizosaccharomyces pombe (strain 972 / ATCC 24843) (Fission yeast).